A 511-amino-acid polypeptide reads, in one-letter code: 2,3-bisphosphoglycerate-independent phosphoglycerate mutase (511 aa).

Positions 14 and 64 each coordinate Mn(2+). Serine 64 serves as the catalytic Phosphoserine intermediate. Substrate is bound by residues histidine 125, 155–156 (RD), arginine 187, arginine 193, 259–262 (RADR), and lysine 333. The Mn(2+) site is built by aspartate 400, histidine 404, aspartate 441, histidine 442, and histidine 460.

The protein belongs to the BPG-independent phosphoglycerate mutase family. In terms of assembly, monomer. Mn(2+) serves as cofactor.

It catalyses the reaction (2R)-2-phosphoglycerate = (2R)-3-phosphoglycerate. The protein operates within carbohydrate degradation; glycolysis; pyruvate from D-glyceraldehyde 3-phosphate: step 3/5. In terms of biological role, catalyzes the interconversion of 2-phosphoglycerate and 3-phosphoglycerate. The polypeptide is 2,3-bisphosphoglycerate-independent phosphoglycerate mutase (Pseudomonas putida (strain GB-1)).